A 622-amino-acid chain; its full sequence is MSKVIGIDLGTTNSCVSVYERGESKVIPNKEGKNTTPSVVAFTDKGEILVGDSAKRQAVTNPEKTIYSIKRIMGLMINEDAAKEAKNRLPYHITERNGACAIEIAGKIYTPQEISAKVLMKLKEDAEAFLGEKVEDAVITVPAYFNDAQRKATKEAGTIAGLNVLRIINEPTAAALAYGLDKKESEKIVVYDLGGGTFDVTVLETGDNVVEVLATGGNAFLGGDDFDNKLIDYLASEFKDETGIDLKNDVMALQRLKEAAENAKKELSSANETNVNLPFITADASGPKHLTKTITRAKFESMIDGLVAETISKINEVVKDAGLDKSEVKEIVMVGGSTRVPLVQEEVKKAFGKDLNKSVNPDEVVAIGAAIQGAVIKGDVKDVLLLDVTPLSLGIETLGGVMTKIIEKGTTIPTKKEQTFSTAEDNQSAVTINVLQGEREFSRDNKSLGNFNLEGIPPAPRGMPQIEVTFDIDANGILTVSAKDKATGKAQEIKITGSSGLSEEEINNMVKDAELHKEEDRKRKEAVEARNSADSLVHQVEKSLSELGEKVSDEDKANIQKALDDLKETLKNANASKEEIESKMKTLSEVSHKLAENMYKKDEKPSDDKKKKDDDVIDAEVE.

At threonine 197 the chain carries Phosphothreonine; by autocatalysis. Basic and acidic residues-rich tracts occupy residues 515 to 528 and 575 to 614; these read LHKEEDRKRKEAVE and ASKEEIESKMKTLSEVSHKLAENMYKKDEKPSDDKKKKDD. 2 disordered regions span residues 515–537 and 575–622; these read LHKEEDRKRKEAVEARNSADSLV and ASKE…AEVE.

The protein belongs to the heat shock protein 70 family.

In terms of biological role, acts as a chaperone. The sequence is that of Chaperone protein DnaK from Campylobacter lari (strain RM2100 / D67 / ATCC BAA-1060).